The sequence spans 561 residues: Methyl-accepting chemotaxis protein CtpM (561 aa).

Over 1 to 11 (MMRLTLKSKVL) the chain is Cytoplasmic. Residues 12 to 32 (LLAMVPVLLFALVLSGGAVLI) form a helical membrane-spanning segment. Over 33 to 205 (LKKQADAEVK…KQDIDERIGT (173 aa)) the chain is Periplasmic. The helical transmembrane segment at 206–226 (LIASIVGIAGVLLVVLLVIGL) threads the bilayer. Residues 227–561 (AVANAMLRPL…LGRLVGQFRI (335 aa)) are Cytoplasmic-facing. The HAMP domain occupies 230–284 (NAMLRPLHQIRQNLDDIAAGEGDLTRRLPVTSYDELGELAGSFNRFVEKIHGLVR). The region spanning 289–525 (MTGDLKQLVE…EINRSVHQIA (237 aa)) is the Methyl-accepting transducer domain. Residues 333–357 (HEVAQSAQRAAEAAQQTDHEGQAAK) form a disordered region. The span at 336 to 348 (AQSAQRAAEAAQQ) shows a compositional bias: low complexity.

Belongs to the methyl-accepting chemotaxis (MCP) protein family. In terms of assembly, homodimer. The ligand-binding domain (LBD) is dimeric in the presence and the absence of ligands.

Its subcellular location is the cell inner membrane. Its function is as follows. Chemotactic-signal transducers respond to changes in the concentration of attractants and repellents in the environment, transduce a signal from the outside to the inside of the cell, and facilitate sensory adaptation through the variation of the level of methylation. Directly recognizes five C4-dicarboxylic acids: L-malic, citramalic, citraconic, bromosuccinic and methylsuccinic acids. Three of the identified ligands act as chemoattractants (L-malic, D,L-bromosuccinic and L-citramalic acids) whereas two of them (L-methylsuccinic and citraconic acids) behave as antagonists by inhibiting the downstream chemotaxis signaling cascade. Antagonists compete with chemoattractants, thereby decreasing the affinity for chemoattractants and the subsequent chemotactic response. Acts through the che chemosensory pathway. This is Methyl-accepting chemotaxis protein CtpM from Pseudomonas aeruginosa (strain ATCC 15692 / DSM 22644 / CIP 104116 / JCM 14847 / LMG 12228 / 1C / PRS 101 / PAO1).